The sequence spans 826 residues: Protein lozenge (826 aa).

Disordered stretches follow at residues 1 to 45, 87 to 171, and 214 to 263; these read MHLH…ASQT, PVSV…WSSS, and ASVG…NNNN. Over residues 12–24 the composition is skewed to pro residues; the sequence is PPSPSPNPTPTPS. The segment covering 106–141 has biased composition (basic residues); sequence SHHHHHLHHHYSPYHHAHPYHPPHPHAPHHHHHHHP. Positions 142–153 are enriched in pro residues; that stretch reads PYPYPPAGPHPP. Positions 156–171 are enriched in polar residues; it reads VTSSSTSPTGNGWSSS. A Runt domain is found at 275–403; it reads LVQKRQQEHP…TVDGPREPRS (129 aa). Positions 774 to 798 are enriched in low complexity; it reads QQQQQQQQQQQQVHHPQQQQVESAG. Residues 774–826 form a disordered region; that stretch reads QQQQQQQQQQQQVHHPQQQQVESAGEVGGSGAGGVESAREEDVGDLSQVWRPY.

In terms of tissue distribution, expressed in the pupal eye during programmed cell death.

The protein resides in the nucleus. Functionally, involved in prepatterning photoreceptor precursors in the developing eye; in the larval eye disk it defines a subset of cells as an equipotential group that is competent to respond to the sevenless developmental signal and another subset that confer proper photoreceptor identity by positively regulating the homeo box gene Bar. Involved in the aop/pnt dynamic in a Ras-dependent manner to regulate pros expression. Promotes apoptosis in the pupal eye by directly activating aos and klu. Also modulates hid- and rpr-mediated cell death. Regulates amos function in olfactory sensilla development. The sequence is that of Protein lozenge (lz) from Drosophila melanogaster (Fruit fly).